Here is a 160-residue protein sequence, read N- to C-terminus: Type IV major fimbrial protein FimA (160 aa).

Residues 1–7 (MKSLQKG) constitute a propeptide, leader sequence. Residue Phe8 is modified to N-methylphenylalanine. Residues 8–28 (FTLIELMIVVAIIGILAAFAI) traverse the membrane as a helical segment. A disulfide bond links Cys63 and Cys105.

This sequence belongs to the N-Me-Phe pilin family. As to quaternary structure, the pili are polar flexible filaments of about 5.4 nanometers diameter and 2.5 micrometers average length; they consist of only a single polypeptide chain arranged in a helical configuration of five subunits per turn in the assembled pilus.

It localises to the fimbrium. The protein localises to the membrane. In terms of biological role, major component of the type IV fimbriae that plays an essential role in twitching motility, natural transformation, and protease secretion. The protein is Type IV major fimbrial protein FimA (fimA) of Dichelobacter nodosus (Bacteroides nodosus).